The sequence spans 427 residues: Trigger factor (427 aa).

The PPIase FKBP-type domain maps to 163–248; sequence GDTVVIDFVG…IHEVKAKEVP (86 aa).

The protein belongs to the FKBP-type PPIase family. Tig subfamily.

It localises to the cytoplasm. It catalyses the reaction [protein]-peptidylproline (omega=180) = [protein]-peptidylproline (omega=0). Involved in protein export. Acts as a chaperone by maintaining the newly synthesized protein in an open conformation. Functions as a peptidyl-prolyl cis-trans isomerase. This Streptococcus pneumoniae (strain Hungary19A-6) protein is Trigger factor.